The following is a 310-amino-acid chain: Beta sliding clamp (310 aa).

It belongs to the beta sliding clamp family. As to quaternary structure, forms a ring-shaped head-to-tail homodimer around DNA which binds and tethers DNA polymerases and other proteins to the DNA. The DNA replisome complex has a single clamp-loading complex (3 tau and 1 each of delta, delta', psi and chi subunits) which binds 3 Pol III cores (1 core on the leading strand and 2 on the lagging strand) each with a beta sliding clamp dimer. Additional proteins in the replisome are other copies of gamma, psi and chi, Ssb, DNA helicase and RNA primase.

Its subcellular location is the cytoplasm. Its function is as follows. Confers DNA tethering and processivity to DNA polymerases and other proteins. Acts as a clamp, forming a ring around DNA (a reaction catalyzed by the clamp-loading complex) which diffuses in an ATP-independent manner freely and bidirectionally along dsDNA. Initially characterized for its ability to contact the catalytic subunit of DNA polymerase III (Pol III), a complex, multichain enzyme responsible for most of the replicative synthesis in bacteria; Pol III exhibits 3'-5' exonuclease proofreading activity. The beta chain is required for initiation of replication as well as for processivity of DNA replication. The chain is Beta sliding clamp (dnaN) from Micrococcus luteus (Micrococcus lysodeikticus).